Here is a 487-residue protein sequence, read N- to C-terminus: Protein nucleotidyltransferase YdiU (487 aa).

The ATP site is built by Gly90, Gly92, Arg93, Lys113, Asp125, Gly126, Arg176, and Arg183. Asp252 (proton acceptor) is an active-site residue. Asn253 and Asp262 together coordinate Mg(2+). Residue Asp262 coordinates ATP.

The protein belongs to the SELO family. Mg(2+) serves as cofactor. Requires Mn(2+) as cofactor.

It carries out the reaction L-seryl-[protein] + ATP = 3-O-(5'-adenylyl)-L-seryl-[protein] + diphosphate. The catalysed reaction is L-threonyl-[protein] + ATP = 3-O-(5'-adenylyl)-L-threonyl-[protein] + diphosphate. It catalyses the reaction L-tyrosyl-[protein] + ATP = O-(5'-adenylyl)-L-tyrosyl-[protein] + diphosphate. The enzyme catalyses L-histidyl-[protein] + UTP = N(tele)-(5'-uridylyl)-L-histidyl-[protein] + diphosphate. It carries out the reaction L-seryl-[protein] + UTP = O-(5'-uridylyl)-L-seryl-[protein] + diphosphate. The catalysed reaction is L-tyrosyl-[protein] + UTP = O-(5'-uridylyl)-L-tyrosyl-[protein] + diphosphate. Functionally, nucleotidyltransferase involved in the post-translational modification of proteins. It can catalyze the addition of adenosine monophosphate (AMP) or uridine monophosphate (UMP) to a protein, resulting in modifications known as AMPylation and UMPylation. The sequence is that of Protein nucleotidyltransferase YdiU from Pseudomonas fluorescens (strain SBW25).